A 368-amino-acid chain; its full sequence is Ribosomal RNA large subunit methyltransferase M (368 aa).

S-adenosyl-L-methionine-binding positions include S189, 222–225 (CPGG), D241, D261, and D278. K307 acts as the Proton acceptor in catalysis.

The protein belongs to the class I-like SAM-binding methyltransferase superfamily. RNA methyltransferase RlmE family. RlmM subfamily. In terms of assembly, monomer.

It is found in the cytoplasm. It carries out the reaction cytidine(2498) in 23S rRNA + S-adenosyl-L-methionine = 2'-O-methylcytidine(2498) in 23S rRNA + S-adenosyl-L-homocysteine + H(+). In terms of biological role, catalyzes the 2'-O-methylation at nucleotide C2498 in 23S rRNA. The chain is Ribosomal RNA large subunit methyltransferase M from Yersinia pseudotuberculosis serotype O:1b (strain IP 31758).